We begin with the raw amino-acid sequence, 334 residues long: tRNA-dihydrouridine(20/20a) synthase (334 aa).

FMN-binding positions include 17-19 (PMM) and Q70. C100 acts as the Proton donor in catalysis. FMN contacts are provided by residues K139, H171, 211-213 (NGG), and 233-234 (GR).

It belongs to the Dus family. DusA subfamily. FMN is required as a cofactor.

It catalyses the reaction 5,6-dihydrouridine(20) in tRNA + NADP(+) = uridine(20) in tRNA + NADPH + H(+). The enzyme catalyses 5,6-dihydrouridine(20) in tRNA + NAD(+) = uridine(20) in tRNA + NADH + H(+). The catalysed reaction is 5,6-dihydrouridine(20a) in tRNA + NADP(+) = uridine(20a) in tRNA + NADPH + H(+). It carries out the reaction 5,6-dihydrouridine(20a) in tRNA + NAD(+) = uridine(20a) in tRNA + NADH + H(+). Catalyzes the synthesis of 5,6-dihydrouridine (D), a modified base found in the D-loop of most tRNAs, via the reduction of the C5-C6 double bond in target uridines. Specifically modifies U20 and U20a in tRNAs. This Synechocystis sp. (strain ATCC 27184 / PCC 6803 / Kazusa) protein is tRNA-dihydrouridine(20/20a) synthase (dus2).